The sequence spans 164 residues: Vasopressin-neurophysin 2-copeptin (164 aa).

A signal peptide spans 1-19 (MPDTMLPACFLGLLAFSSA). C20 and C25 are joined by a disulfide. G28 is modified (glycine amide). Cystine bridges form between C41–C85, C44–C58, C52–C75, C59–C65, C92–C104, C98–C116, and C105–C110. N131 carries N-linked (GlcNAc...) asparagine glycosylation.

The protein belongs to the vasopressin/oxytocin family. In terms of assembly, interacts with vasopressin receptors V1bR/AVPR1B (Ki=85 pM), V1aR/AVPR1A (Ki=0.6 nM) and V2R/AVPR2 (Ki=4.9 nM). Interacts with oxytocin receptor (OXTR) (Ki=110 nM). (Microbial infection) May interact with SARS coronavirus-2/SARS-CoV-2; they may form a complex with secreted ACE2.

It localises to the secreted. Its function is as follows. Specifically binds vasopressin. Has a direct antidiuretic action on the kidney, it also causes vasoconstriction of the peripheral vessels. Acts by binding to vasopressin receptors (V1bR/AVPR1B, V1aR/AVPR1A, and V2R/AVPR2). The sequence is that of Vasopressin-neurophysin 2-copeptin (AVP) from Homo sapiens (Human).